Reading from the N-terminus, the 55-residue chain is Large ribosomal subunit protein bL33B (55 aa).

The protein belongs to the bacterial ribosomal protein bL33 family.

The polypeptide is Large ribosomal subunit protein bL33B (Salinispora arenicola (strain CNS-205)).